Here is a 139-residue protein sequence, read N- to C-terminus: Small ribosomal subunit protein uS12 (139 aa).

The interval 119–139 is disordered; that stretch reads GVDKRRQQRSAYGAKKPKPKS.

This sequence belongs to the universal ribosomal protein uS12 family. Part of the 30S ribosomal subunit. Contacts proteins S8 and S17. May interact with IF1 in the 30S initiation complex.

Functionally, with S4 and S5 plays an important role in translational accuracy. In terms of biological role, interacts with and stabilizes bases of the 16S rRNA that are involved in tRNA selection in the A site and with the mRNA backbone. Located at the interface of the 30S and 50S subunits, it traverses the body of the 30S subunit contacting proteins on the other side and probably holding the rRNA structure together. The combined cluster of proteins S8, S12 and S17 appears to hold together the shoulder and platform of the 30S subunit. The sequence is that of Small ribosomal subunit protein uS12 from Mycoplasma genitalium (strain ATCC 33530 / DSM 19775 / NCTC 10195 / G37) (Mycoplasmoides genitalium).